A 520-amino-acid chain; its full sequence is Sterile alpha motif domain-containing protein 3 (520 aa).

The 68-residue stretch at Trp-4–Lys-71 folds into the SAM domain. A disordered region spans residues Thr-85–Asn-114.

The protein is Sterile alpha motif domain-containing protein 3 (SAMD3) of Homo sapiens (Human).